A 150-amino-acid polypeptide reads, in one-letter code: Large ribosomal subunit protein bL9 (150 aa).

This sequence belongs to the bacterial ribosomal protein bL9 family.

Binds to the 23S rRNA. This chain is Large ribosomal subunit protein bL9, found in Polaromonas sp. (strain JS666 / ATCC BAA-500).